Reading from the N-terminus, the 347-residue chain is Eukaryotic translation initiation factor 3 subunit I (347 aa).

WD repeat units follow at residues 8–47 (GHER…RLGT), 50–89 (GHTG…VIHT), 91–135 (TAPV…VTKE), 151–190 (ENHK…FITS), 193–232 (LHTQ…QLKS), and 290–329 (GHFG…FDFK).

This sequence belongs to the eIF-3 subunit I family. As to quaternary structure, component of the eukaryotic translation initiation factor 3 (eIF-3) complex.

The protein localises to the cytoplasm. Its function is as follows. Component of the eukaryotic translation initiation factor 3 (eIF-3) complex, which is involved in protein synthesis of a specialized repertoire of mRNAs and, together with other initiation factors, stimulates binding of mRNA and methionyl-tRNAi to the 40S ribosome. The eIF-3 complex specifically targets and initiates translation of a subset of mRNAs involved in cell proliferation. The polypeptide is Eukaryotic translation initiation factor 3 subunit I (Vanderwaltozyma polyspora (strain ATCC 22028 / DSM 70294 / BCRC 21397 / CBS 2163 / NBRC 10782 / NRRL Y-8283 / UCD 57-17) (Kluyveromyces polysporus)).